Reading from the N-terminus, the 114-residue chain is Cystatin Pr15a (114 aa).

An N-terminal signal peptide occupies residues 1–22; it reads MFTVKLLAFMVVAVSLQHLAEA. Positions 29–83 constitute a Cystatin domain; that stretch reads GCPVEVDPNREDIKKSLAHVMAAKNSPDELVRIIKASTQVVNGIKYKVVFEVKNP.

The protein belongs to the cystatin family. In terms of tissue distribution, expressed by the venom gland (anterior main gland) (at protein level).

The protein localises to the secreted. The sequence is that of Cystatin Pr15a from Platymeris rhadamanthus (Red spot assassin bug).